The primary structure comprises 150 residues: Small ribosomal subunit protein bS6 (150 aa).

A disordered region spans residues 99 to 150 (GPSAMLQKRDRDDRGERGERGFGGGGFGGGRDREDRPRRGRDREEAATEETF). 2 stretches are compositionally biased toward basic and acidic residues: residues 105 to 118 (QKRD…RGER) and 128 to 144 (GRDR…REEA).

Belongs to the bacterial ribosomal protein bS6 family.

In terms of biological role, binds together with bS18 to 16S ribosomal RNA. This chain is Small ribosomal subunit protein bS6, found in Azorhizobium caulinodans (strain ATCC 43989 / DSM 5975 / JCM 20966 / LMG 6465 / NBRC 14845 / NCIMB 13405 / ORS 571).